The chain runs to 290 residues: Outer dense fiber protein 4 (290 aa).

Ser-28 bears the Phosphoserine mark. 4 consecutive transmembrane segments (helical) span residues 44–64 (AQVV…LMVF), 132–152 (ISFI…HLPY), 164–184 (LIGI…LLLF), and 201–221 (IGWS…CGIL). Residues 262–290 (ADILDPTQDDQKPLSSDNIALPPNPDTTD) are disordered.

The protein resides in the membrane. In terms of biological role, component of the outer dense fibers (ODF) of spermatozoa which could be involved in sperm tail structure, sperm movement and general organization of cellular cytoskeleton. This is Outer dense fiber protein 4 (Odf4) from Rattus norvegicus (Rat).